The following is a 210-amino-acid chain: Cytochrome c4 (210 aa).

The signal sequence occupies residues 1–20 (MNKALVTLLLTLGITGLAHA). Heme c contacts are provided by C34, C37, H38, M86, C139, C142, H143, and M187.

Post-translationally, binds 2 heme c groups covalently per subunit.

The protein localises to the periplasm. Functionally, diheme, high potential cytochrome c believed to be an intermediate electron donor to terminal oxidation systems. The polypeptide is Cytochrome c4 (cycA) (Azotobacter vinelandii).